The following is a 637-amino-acid chain: Anthranilate synthase, phenazine specific (637 aa).

Positions 1 to 434 (MSQAAARLME…QRQQTQSDFS (434 aa)) are anthranilate synthase component I. The 192-residue stretch at 437 to 628 (QVLIVDAEDT…LRHALIHTPV (192 aa)) folds into the Glutamine amidotransferase type-1 domain. Residues Cys-517, His-602, and Glu-604 each act as for GATase activity in the active site.

The enzyme catalyses chorismate + L-glutamine = anthranilate + pyruvate + L-glutamate + H(+). The protein operates within antibiotic biosynthesis; phenazine biosynthesis. Its function is as follows. Involved in the biosynthesis of the antibiotic, phenazine, a nitrogen-containing heterocyclic molecule having important roles in virulence, competition and biological control. The polypeptide is Anthranilate synthase, phenazine specific (phzE) (Pseudomonas fluorescens).